The following is a 99-amino-acid chain: Small ribosomal subunit protein bS21 (99 aa).

Residues 60–99 (KKLQREGLLPMKPKPVFGAGPGGDRRGPGAGPGAGPRPAR) form a disordered region.

Belongs to the bacterial ribosomal protein bS21 family.

The chain is Small ribosomal subunit protein bS21 from Rhodopseudomonas palustris (strain BisA53).